We begin with the raw amino-acid sequence, 220 residues long: Large ribosomal subunit protein uL6c (220 aa).

The N-terminal 38 residues, 1-38, are a transit peptide targeting the chloroplast; the sequence is MSLPLPSHMKSVFLGMKVEISTSVPVTRIGFWRKSVDC.

Component of the chloroplast large ribosomal subunit (LSU). Mature 70S chloroplast ribosomes of higher plants consist of a small (30S) and a large (50S) subunit. The 30S small subunit contains 1 molecule of ribosomal RNA (16S rRNA) and 24 different proteins. The 50S large subunit contains 3 rRNA molecules (23S, 5S and 4.5S rRNA) and 33 different proteins.

Its subcellular location is the plastid. It is found in the chloroplast. Its function is as follows. Component of the chloroplast ribosome (chloro-ribosome), a dedicated translation machinery responsible for the synthesis of chloroplast genome-encoded proteins, including proteins of the transcription and translation machinery and components of the photosynthetic apparatus. The sequence is that of Large ribosomal subunit protein uL6c (RPL6) from Spinacia oleracea (Spinach).